Consider the following 671-residue polypeptide: Phenol 2-monooxygenase (671 aa).

Residues 10–43 and 295–305 each bind FAD; these read DVLI…RIFD and LQEGRVFLAGD.

The protein belongs to the PheA/TfdB FAD monooxygenase family. FAD is required as a cofactor.

The protein resides in the cytoplasm. The enzyme catalyses phenol + NADPH + O2 + H(+) = catechol + NADP(+) + H2O. The protein operates within aromatic compound metabolism; phenol degradation. In terms of biological role, hydroxylates phenol to catechol. Also acts on cresols. In Ralstonia pickettii (Burkholderia pickettii), this protein is Phenol 2-monooxygenase (tbuD).